Here is a 660-residue protein sequence, read N- to C-terminus: MVTSLNEDNESVTVEWIENGDTKGKEIDLESIFSLNPDLVPDEDIEPSPETPPPPTSSAKVNKIVKNRRTVASIKNEPPPRDNRVVGSARARPSQLPEQSSSAQQNARRKSNCVKEVEKLQEKREKRRLQQQELREKRAQDVDATNPNYEIMCMIRDFRGSLDYRPLTTADPIDEHRICVCVRKRPLNKKETQMKDLDVITIPSKDVVMVHEPKQKVDLTRYLENQTFRFDYAFDDSAPNEMVYRFTARPLVETIFERGMATCFAYGQTGSGKTHTMGGDFSGKNQDCSKGIYALAARDVFLMLKKPNYKKLELQVNATFFEIYSGKVFDLLNRKTKLRVLEDGKQQVQVVGLQEREVKCVEDVLKLIDIGNSCRTSGQTSANAHSSRSHAVFQIILRRKGKLHGKFSLIDLAGNERGADTSSADRQTRLEGAEINKSLLAHKECIRALGRNKPHTPFRASKLTQVLRDSFIGENSRTCMIATISPGMASCENTLNTLRYANRVKELTVDPTAAGDVRPIMHHPPNQIDDLEAQWGVGSSPQRDDLKLLCEQNEEEVSPQLFTFHEAVSQMVEMEEQVVEDHRAVFQESIRWLEDEKALLEMTEEVDYDVDSYATQLEAILEQKIDILTELRDKVKSFRAALQEEEQASKQINPKRPRAL.

The tract at residues 1-140 is disordered; sequence MVTSLNEDNE…QQELREKRAQ (140 aa). The interval 1–171 is globular; sequence MVTSLNEDNE…LDYRPLTTAD (171 aa). Ser48 is subject to Phosphoserine. Residues Thr51 and Thr70 each carry the phosphothreonine modification. Ser73 is modified (phosphoserine). The residue at position 75 (Lys75) is an N6-acetyllysine. The segment covering 96-106 has biased composition (polar residues); the sequence is LPEQSSSAQQN. Residues 113–140 show a composition bias toward basic and acidic residues; sequence CVKEVEKLQEKREKRRLQQQELREKRAQ. In terms of domain architecture, Kinesin motor spans 177 to 507; sequence RICVCVRKRP…LRYANRVKEL (331 aa). ATP is bound at residue 267–274; the sequence is GQTGSGKT. Residues 614–653 are a coiled coil; that stretch reads ATQLEAILEQKIDILTELRDKVKSFRAALQEEEQASKQIN.

Belongs to the TRAFAC class myosin-kinesin ATPase superfamily. Kinesin family. MCAK/KIF2 subfamily. Interacts with AURKA and PLK1. Interacts with PSRC1. Interacts with MCRS1; the interaction enhances recruitment of KIF2A to the minus ends of spindle microtubules which promotes chromosome alignment.

The protein resides in the cytoplasm. It localises to the cytoskeleton. Its subcellular location is the microtubule organizing center. The protein localises to the centrosome. It is found in the spindle pole. The protein resides in the spindle. In terms of biological role, plus end-directed microtubule-dependent motor required for normal brain development. May regulate microtubule dynamics during axonal growth. Required for normal progression through mitosis. Required for normal congress of chromosomes at the metaphase plate. Required for normal spindle dynamics during mitosis. Promotes spindle turnover. Implicated in formation of bipolar mitotic spindles. Has microtubule depolymerization activity. This Bos taurus (Bovine) protein is Kinesin-like protein KIF2A (KIF2A).